A 224-amino-acid polypeptide reads, in one-letter code: Lipoprotein-releasing system ATP-binding protein LolD (224 aa).

One can recognise an ABC transporter domain in the interval 5-224 (LVLDGLTKAY…VVRLEAGRVV (220 aa)). 42–49 (APSGAGKS) provides a ligand contact to ATP.

The protein belongs to the ABC transporter superfamily. Lipoprotein translocase (TC 3.A.1.125) family. The complex is composed of two ATP-binding proteins (LolD) and two transmembrane proteins (LolC and LolE).

It localises to the cell inner membrane. Its function is as follows. Part of the ABC transporter complex LolCDE involved in the translocation of mature outer membrane-directed lipoproteins, from the inner membrane to the periplasmic chaperone, LolA. Responsible for the formation of the LolA-lipoprotein complex in an ATP-dependent manner. The chain is Lipoprotein-releasing system ATP-binding protein LolD from Cereibacter sphaeroides (strain ATCC 17023 / DSM 158 / JCM 6121 / CCUG 31486 / LMG 2827 / NBRC 12203 / NCIMB 8253 / ATH 2.4.1.) (Rhodobacter sphaeroides).